Here is a 671-residue protein sequence, read N- to C-terminus: DNA ligase (671 aa).

Residues 32-36, 81-82, and glutamate 113 contribute to the NAD(+) site; these read DAEYD and SL. Lysine 115 serves as the catalytic N6-AMP-lysine intermediate. NAD(+)-binding residues include arginine 136, glutamate 173, lysine 290, and lysine 314. Zn(2+) is bound by residues cysteine 408, cysteine 411, cysteine 426, and cysteine 432. Residues 593–671 enclose the BRCT domain; that stretch reads EIDSPFAGKT…EAEMLRLLGS (79 aa).

The protein belongs to the NAD-dependent DNA ligase family. LigA subfamily. Mg(2+) is required as a cofactor. Mn(2+) serves as cofactor.

It catalyses the reaction NAD(+) + (deoxyribonucleotide)n-3'-hydroxyl + 5'-phospho-(deoxyribonucleotide)m = (deoxyribonucleotide)n+m + AMP + beta-nicotinamide D-nucleotide.. DNA ligase that catalyzes the formation of phosphodiester linkages between 5'-phosphoryl and 3'-hydroxyl groups in double-stranded DNA using NAD as a coenzyme and as the energy source for the reaction. It is essential for DNA replication and repair of damaged DNA. The sequence is that of DNA ligase from Escherichia coli (strain SE11).